We begin with the raw amino-acid sequence, 139 residues long: MAMTFHLDVVSAEEQMFSGTVQSIQVSGSEGELGIRPNHAPLLTAIKPGMIRIVKQHGEEEVIYLSGGVLEVQPGAVTVLADTAIRGSDLDEARALEAKRKAEAHMNSSHGDVDFAVASAELAKAIAKLRVIELTKNAM.

It belongs to the ATPase epsilon chain family. In terms of assembly, F-type ATPases have 2 components, CF(1) - the catalytic core - and CF(0) - the membrane proton channel. CF(1) has five subunits: alpha(3), beta(3), gamma(1), delta(1), epsilon(1). CF(0) has three main subunits: a, b and c.

Its subcellular location is the cell inner membrane. Its function is as follows. Produces ATP from ADP in the presence of a proton gradient across the membrane. The protein is ATP synthase epsilon chain of Erwinia tasmaniensis (strain DSM 17950 / CFBP 7177 / CIP 109463 / NCPPB 4357 / Et1/99).